A 202-amino-acid chain; its full sequence is LexA repressor (202 aa).

The H-T-H motif DNA-binding region spans 32 to 52; that stretch reads RAEVCSAFGFKSPNAAETHLR. Active-site for autocatalytic cleavage activity residues include Ser121 and Lys158.

Belongs to the peptidase S24 family. Homodimer.

It carries out the reaction Hydrolysis of Ala-|-Gly bond in repressor LexA.. Its function is as follows. Represses a number of genes involved in the response to DNA damage (SOS response), including recA and lexA. In the presence of single-stranded DNA, RecA interacts with LexA causing an autocatalytic cleavage which disrupts the DNA-binding part of LexA, leading to derepression of the SOS regulon and eventually DNA repair. The chain is LexA repressor from Azoarcus sp. (strain BH72).